The sequence spans 560 residues: 2-isopropylmalate synthase (560 aa).

Residues 30-303 (PVWCSVDLRD…DPEIDCSNIE (274 aa)) form the Pyruvate carboxyltransferase domain. Mg(2+)-binding residues include Asp39, His242, His244, and Asn278. Residues 437–560 (QPEGRLRFVD…RVLDVKAGKA (124 aa)) form a regulatory domain region.

This sequence belongs to the alpha-IPM synthase/homocitrate synthase family. LeuA type 2 subfamily. As to quaternary structure, homodimer. The cofactor is Mg(2+).

The protein localises to the cytoplasm. It carries out the reaction 3-methyl-2-oxobutanoate + acetyl-CoA + H2O = (2S)-2-isopropylmalate + CoA + H(+). Its pathway is amino-acid biosynthesis; L-leucine biosynthesis; L-leucine from 3-methyl-2-oxobutanoate: step 1/4. Catalyzes the condensation of the acetyl group of acetyl-CoA with 3-methyl-2-oxobutanoate (2-ketoisovalerate) to form 3-carboxy-3-hydroxy-4-methylpentanoate (2-isopropylmalate). The sequence is that of 2-isopropylmalate synthase from Rhizobium johnstonii (strain DSM 114642 / LMG 32736 / 3841) (Rhizobium leguminosarum bv. viciae).